The chain runs to 638 residues: Broad-specificity ulvan lyase (638 aa).

Residues 1–27 (MKRRNFIQLSSLATIGMSLPSAGIVNA) form the signal peptide.

It belongs to the polysaccharide lyase 37 family.

Its subcellular location is the periplasm. The enzyme catalyses Endolytic cleavage of (1-&gt;4)-beta-galactosaminic bonds between N-acetylgalactosamine and either D-glucuronic acid or L-iduronic acid to produce a mixture of Delta(4)-unsaturated oligosaccharides of different sizes that are ultimately degraded to Delta(4)-unsaturated tetra- and disaccharides.. It catalyses the reaction Elimination of sulfate, appears to act on linkages between N-acetyl-D-glucosamine and uronate. Product is an unsaturated sugar.. Its function is as follows. Broad-specificity lyase involved in ulvan degradation. Ulvan is the main polysaccharide component of the Ulvales (green seaweed) cell wall. It is composed of disaccharide building blocks comprising 3-sulfated rhamnose (Rha3S) linked to D-glucuronic acid (GlcA), L-iduronic acid (IduA), or D-xylose (Xyl). Ulvan lyase catalyzes the endolytic cleavage of the glycosidic bond between Rha3S and the uronic acids GlcA or IduA, producing oligosaccharides that have unsaturated 4-deoxy-L-threo-hex-4-enopyranosiduronic acid (deltaUA) at the non-reducing end. This results eventually in the degradation of the ulvan polysaccharide into deltaUA-Rha3S disaccharides and deltaUA-Rha3S-Xyl-Rha3S tetrasaccharides. It is also able to degrade the glycosaminoglycans heparan sulfate and chondroitin sulfate. Not active against pectin, xanthan or alginate. The chain is Broad-specificity ulvan lyase from Formosa agariphila (strain DSM 15362 / KCTC 12365 / LMG 23005 / KMM 3901 / M-2Alg 35-1).